The primary structure comprises 134 residues: Small ribosomal subunit protein uS11 (134 aa).

Disordered stretches follow at residues 1-22 (MPPKGRQGAAKKVRRKEKKNVA) and 114-134 (SIQDVTPTPHNGCRPPKRRRV). Residues 9-22 (AAKKVRRKEKKNVA) are compositionally biased toward basic residues.

The protein belongs to the universal ribosomal protein uS11 family. In terms of assembly, part of the 30S ribosomal subunit. Interacts with proteins S7 and S18. Binds to IF-3.

Located on the platform of the 30S subunit, it bridges several disparate RNA helices of the 16S rRNA. Forms part of the Shine-Dalgarno cleft in the 70S ribosome. In Streptomyces avermitilis (strain ATCC 31267 / DSM 46492 / JCM 5070 / NBRC 14893 / NCIMB 12804 / NRRL 8165 / MA-4680), this protein is Small ribosomal subunit protein uS11.